Reading from the N-terminus, the 290-residue chain is Prepilin leader peptidase/N-methyltransferase (290 aa).

Residues 14 to 34 (LYFSLVFLFSLMIGSFLNVVI) traverse the membrane as a helical segment. The Zn(2+) site is built by cysteine 74, cysteine 77, cysteine 99, and cysteine 102. Transmembrane regions (helical) follow at residues 106 to 126 (ISAR…AVAM), 130 to 150 (PGWG…LTFI), 161 to 181 (LTLP…FVSL), 185 to 205 (VIGA…FKLL), 232 to 252 (PIVL…LILL), and 261 to 281 (IPFG…GDSI).

This sequence belongs to the peptidase A24 family. It depends on Zn(2+) as a cofactor.

It localises to the cell inner membrane. The enzyme catalyses Typically cleaves a -Gly-|-Phe- bond to release an N-terminal, basic peptide of 5-8 residues from type IV prepilin, and then N-methylates the new N-terminal amino group, the methyl donor being S-adenosyl-L-methionine.. Functionally, plays an essential role in type IV pili and type II pseudopili formation by proteolytically removing the leader sequence from substrate proteins and subsequently monomethylating the alpha-amino group of the newly exposed N-terminal phenylalanine. The polypeptide is Prepilin leader peptidase/N-methyltransferase (tapD) (Aeromonas hydrophila).